The sequence spans 394 residues: uncharacterized protein (394 aa).

This sequence belongs to the mycobacterial PPE family.

This is an uncharacterized protein from Mycobacterium tuberculosis (strain CDC 1551 / Oshkosh).